The primary structure comprises 216 residues: LexA repressor (216 aa).

The H-T-H motif DNA-binding region spans 29 to 49 (RAEIAQALGFRSPNAAEDHLK). Active-site for autocatalytic cleavage activity residues include Ser134 and Lys171.

Belongs to the peptidase S24 family. Homodimer.

The enzyme catalyses Hydrolysis of Ala-|-Gly bond in repressor LexA.. In terms of biological role, represses a number of genes involved in the response to DNA damage (SOS response), including recA and lexA. In the presence of single-stranded DNA, RecA interacts with LexA causing an autocatalytic cleavage which disrupts the DNA-binding part of LexA, leading to derepression of the SOS regulon and eventually DNA repair. The sequence is that of LexA repressor from Bordetella parapertussis (strain 12822 / ATCC BAA-587 / NCTC 13253).